Reading from the N-terminus, the 150-residue chain is Large ribosomal subunit protein bL9 (150 aa).

It belongs to the bacterial ribosomal protein bL9 family.

Binds to the 23S rRNA. The chain is Large ribosomal subunit protein bL9 from Janthinobacterium sp. (strain Marseille) (Minibacterium massiliensis).